The sequence spans 618 residues: Syncytin-B (618 aa).

The N-terminal stretch at 1–17 (MTGFWVLCFVLFPSSLS) is a signal peptide. Over 18–545 (YPESWMPLVN…SWGQWPDLGR (528 aa)) the chain is Extracellular. Asn27 carries N-linked (GlcNAc...) asparagine glycosylation. The CXXC signature appears at 44 to 47 (CWVC). Intrachain disulfides connect Cys44–Cys47, Cys44–Cys507, and Cys499–Cys506. N-linked (GlcNAc...) asparagine glycosylation is found at Asn184, Asn274, and Asn357. Positions 422–442 (LFPFLAGLGISSALGTGIAGL) are fusion peptide. The tract at residues 482 to 498 (LQNRRALDLITAEKGGT) is immunosuppression. The CX6CC motif lies at 499 to 507 (CLFLQEECC). Residues 546-566 (WLPWLTPFLGPLLFLFFLLTF) form a helical membrane-spanning segment. Residues 567 to 618 (GSCLLNCLTRFVSQRLGSFVQDTAKRHVDSILQNFQYKKLPQDSPDEDTIPT) lie on the Cytoplasmic side of the membrane.

Belongs to the gamma type-C retroviral envelope protein family. As to quaternary structure, the mature protein consists of a trimer of SU-TM heterodimers. The SU-TM heterodimers are attached by a labile interchain disulfide bond. Post-translationally, synthesized as an inactive precursor that is heavily N-glycosylated and processed likely by furin in the Golgi to yield the mature SU and TM proteins. The cleavage site between SU and TM requires the minimal sequence [KR]-X-[KR]-R. In terms of processing, the CXXC motif is highly conserved across a broad range of retroviral envelope proteins. It is thought to participate in the formation of a labile disulfide bond possibly with the CX6CC motif present in the transmembrane protein. Isomerization of the intersubunit disulfide bond to an SU intrachain disulfide bond is thought to occur upon receptor recognition in order to allow membrane fusion. Highly expressed in placenta where it localizes to syncytiotrophoblasts of the labyrinthine zona. Specifically localizes to syncytiotrophoblast layer II (SynT-II). Also detected at very low levels in ovary.

Its subcellular location is the cell membrane. Functionally, this endogenous retroviral envelope protein has retained its original fusogenic properties. Together with Syna, participates in trophoblast fusion and the formation of a syncytium during placenta morphogenesis. Synb is specifically involved in formation of syncytiotrophoblast layer II (SynT-II). Promotes myoblast fusion, and may play a role in regeneration of damaged muscle tissue in males. May have immunosuppressive activity. The protein is Syncytin-B of Mus musculus (Mouse).